Reading from the N-terminus, the 119-residue chain is Protein YdaY (119 aa).

The protein is Protein YdaY (ydaY) of Escherichia coli (strain K12).